A 115-amino-acid chain; its full sequence is Probable malate:quinone oxidoreductase (115 aa).

Positions 88-115 (QMPAAAPTATAKPAETPREASPQHDMAL) are disordered. The span at 90–101 (PAAAPTATAKPA) shows a compositional bias: low complexity. A compositionally biased stretch (basic and acidic residues) spans 102–115 (ETPREASPQHDMAL).

This sequence belongs to the MQO family. The cofactor is FAD.

The catalysed reaction is (S)-malate + a quinone = a quinol + oxaloacetate. It participates in carbohydrate metabolism; tricarboxylic acid cycle; oxaloacetate from (S)-malate (quinone route): step 1/1. In Klebsiella pneumoniae, this protein is Probable malate:quinone oxidoreductase (mqo).